We begin with the raw amino-acid sequence, 811 residues long: Probable glutamine--tRNA ligase (811 aa).

Residues 190 to 217 (DAAAGKKKGAKAKNSKQKTVDSGKAKEQ) are disordered. A compositionally biased stretch (basic residues) spans 194-205 (GKKKGAKAKNSK). Residues 207-217 (KTVDSGKAKEQ) are compositionally biased toward basic and acidic residues. A 'HIGH' region motif is present at residues 269–279 (PEPNGYLHIGH). ATP contacts are provided by residues 270 to 272 (EPN) and 276 to 282 (HIGHSKA). L-glutamine contacts are provided by Asp302 and Tyr447. ATP is bound by residues Thr466, 495-496 (RL), and 503-505 (MSK). Residues 502-506 (LMSKR) carry the 'KMSKS' region motif.

The protein belongs to the class-I aminoacyl-tRNA synthetase family.

The protein localises to the cytoplasm. It carries out the reaction tRNA(Gln) + L-glutamine + ATP = L-glutaminyl-tRNA(Gln) + AMP + diphosphate. The polypeptide is Probable glutamine--tRNA ligase (qrs1) (Schizosaccharomyces pombe (strain 972 / ATCC 24843) (Fission yeast)).